Here is a 303-residue protein sequence, read N- to C-terminus: Growth/differentiation factor 15 (303 aa).

The signal sequence occupies residues 1 to 30 (MALRALHAQPTGGPQLRFLLFLLLLLLLLS). A propeptide spanning residues 31–188 (WPSQGDALAL…LRSAAGRGRR (158 aa)) is cleaved from the precursor. Asparagine 71 is a glycosylation site (N-linked (GlcNAc...) asparagine). 4 cysteine pairs are disulfide-bonded: cysteine 198-cysteine 205, cysteine 206-cysteine 269, cysteine 235-cysteine 300, and cysteine 239-cysteine 302.

It belongs to the TGF-beta family. In terms of assembly, homodimer; disulfide-linked. Interacts with GFRAL and RET; ligand of GFRAL, which mediates GDF15 internalization and cellular signaling through interaction with RET via the formation of a 2:2:2 ternary complex composed of GDF15, GFRAL and RET. As to expression, detected in plasma (at protein level).

The protein resides in the secreted. In terms of biological role, hormone produced in response to various stresses to confer information about those stresses to the brain, and trigger an aversive response, characterized by nausea and/or loss of appetite. The aversive response is both required to reduce continuing exposure to those stresses at the time of exposure and to promote avoidance behavior in the future. Acts by binding to its receptor, GFRAL, activating GFRAL-expressing neurons localized in the area postrema and nucleus tractus solitarius of the brainstem. It then triggers the activation of neurons localized within the parabrachial nucleus and central amygdala, which constitutes part of the 'emergency circuit' that shapes responses to stressful conditions. The GDF15-GFRAL signal induces expression of genes involved in metabolism, such as lipid metabolism in adipose tissues. Contributes to the effect of metformin, an anti-diabetic drug, on appetite reduction and weight loss: produced in the kidney in response to metformin treatment, thereby activating the GDF15-GFRAL response, leading to reduced appetite and weight. Required for avoidance behavior in response to food allergens: induced downstream of mast cell activation to promote aversion and minimize harmful effects of exposure to noxious substances. Produced in response to anticancer drugs, such as camptothecin or cisplatin, promoting nausea and contributing to malnutrition. Overproduced in many cancers, promoting anorexia in cancer (cachexia). Responsible for the risk of nausea during pregnancy: high levels of GDF15 during pregnancy, mostly originating from embryos, are associated with increased nausea. Maternal sensitivity to nausea is probably determined by pre-pregnancy exposure to GDF15, females with naturally high level of GDF15 being less susceptible to nausea than female rats with low levels of GDF15 before pregnancy. Promotes metabolic adaptation in response to systemic inflammation caused by bacterial and viral infections in order to promote tissue tolerance and prevent tissue damage. Required for tissue tolerance in response to myocardial infarction by acting as an inhibitor of leukocyte integring activation, thereby protecting against cardiac rupture. Inhibits growth hormone signaling on hepatocytes. This is Growth/differentiation factor 15 from Rattus norvegicus (Rat).